Reading from the N-terminus, the 152-residue chain is Ribosome maturation factor RimP (152 aa).

The protein belongs to the RimP family.

Its subcellular location is the cytoplasm. In terms of biological role, required for maturation of 30S ribosomal subunits. The chain is Ribosome maturation factor RimP from Photorhabdus laumondii subsp. laumondii (strain DSM 15139 / CIP 105565 / TT01) (Photorhabdus luminescens subsp. laumondii).